We begin with the raw amino-acid sequence, 230 residues long: MREERPIIALDFPSFEEVKSFLSLFPADERLYVKIGMELYYAEGPDIVRYVKSLGHSVFLDLKLHDIPNTVKSTMAVLSRLGIDMTTVQAAGGVEMLRAAREGLGQGPILIAVTQLTSTSEEQMREDQNIQSTLLASVLHYAKRTAQAKLDGVVCSAHEVKAIKSEVPAGFVCLTPGIRPTGADIGDQKRVMTPHQARAIGSDYIVLGRPITQATDPVKAYHQIKAEWNR.

Substrate-binding positions include Asp11, Lys34, Asp61–Thr70, Thr117, Arg179, Gln188, Gly208, and Arg209. Residue Lys63 is the Proton donor of the active site.

Belongs to the OMP decarboxylase family. Type 1 subfamily. Homodimer.

The enzyme catalyses orotidine 5'-phosphate + H(+) = UMP + CO2. It functions in the pathway pyrimidine metabolism; UMP biosynthesis via de novo pathway; UMP from orotate: step 2/2. Catalyzes the decarboxylation of orotidine 5'-monophosphate (OMP) to uridine 5'-monophosphate (UMP). The polypeptide is Orotidine 5'-phosphate decarboxylase (Streptococcus equi subsp. zooepidemicus (strain MGCS10565)).